Reading from the N-terminus, the 396-residue chain is Elongation factor Tu (396 aa).

Residues 10–206 enclose the tr-type G domain; that stretch reads KPHCNIGTIG…AVDAYIPQPE (197 aa). The G1 stretch occupies residues 19–26; sequence GHVDHGKT. 19 to 26 contributes to the GTP binding site; sequence GHVDHGKT. Residue T26 participates in Mg(2+) binding. The segment at 60–64 is G2; the sequence is GITIS. Residues 81 to 84 form a G3 region; it reads DCPG. GTP contacts are provided by residues 81–85 and 136–139; these read DCPGH and NKCD. The G4 stretch occupies residues 136–139; it reads NKCD. Positions 174–176 are G5; the sequence is SAL.

This sequence belongs to the TRAFAC class translation factor GTPase superfamily. Classic translation factor GTPase family. EF-Tu/EF-1A subfamily. As to quaternary structure, monomer.

The protein localises to the cytoplasm. It catalyses the reaction GTP + H2O = GDP + phosphate + H(+). In terms of biological role, GTP hydrolase that promotes the GTP-dependent binding of aminoacyl-tRNA to the A-site of ribosomes during protein biosynthesis. The polypeptide is Elongation factor Tu (Nitrobacter hamburgensis (strain DSM 10229 / NCIMB 13809 / X14)).